The primary structure comprises 87 residues: Large ribosomal subunit protein bL27c (87 aa).

Residues 1 to 20 (MAHKKGSGSTKNGRDSRSQR) form a disordered region.

This sequence belongs to the bacterial ribosomal protein bL27 family.

The protein resides in the plastid. The protein localises to the chloroplast. The polypeptide is Large ribosomal subunit protein bL27c (Gracilaria tenuistipitata var. liui (Red alga)).